Consider the following 679-residue polypeptide: Protein hook (679 aa).

Residues 6-123 (NEMYYSLLEW…RLLQLVLGCA (118 aa)) enclose the Calponin-homology (CH) domain. Coiled coils occupy residues 135-437 (EIMC…LKCG) and 480-574 (QTAL…QEIL).

It belongs to the hook family. As to quaternary structure, homodimer. Interacts with microtubules via its N-terminus.

It localises to the cytoplasm. It is found in the cytoskeleton. The protein localises to the endosome. Its subcellular location is the synapse. Its function is as follows. Involved in endocytic trafficking by stabilizing organelles of the endocytic pathway. Probably acts as a cytoskeletal linker protein required to tether endosome vesicles to the cytoskeleton. Involved in modulation of endocytosis at stages required for down-regulation of membrane proteins that control synapse size. Not involved in synaptic vesicle recycling. Required in R7 cells for boss endocytosis into multivesicular bodies (MVBs). Has a role in regulating adult longevity. This is Protein hook from Drosophila erecta (Fruit fly).